We begin with the raw amino-acid sequence, 72 residues long: Large ribosomal subunit protein bL31 (72 aa).

Positions 16, 18, 38, and 41 each coordinate Zn(2+).

It belongs to the bacterial ribosomal protein bL31 family. Type A subfamily. In terms of assembly, part of the 50S ribosomal subunit. Zn(2+) is required as a cofactor.

Its function is as follows. Binds the 23S rRNA. This chain is Large ribosomal subunit protein bL31, found in Azoarcus sp. (strain BH72).